A 431-amino-acid chain; its full sequence is MLNFAYQEHVRSYYFDSRNQDFQFPPLTQIEHADVCVIGAGFFGLSAALELAEKGKKVIVLEGARVGFGASGRSGGQAINGFEEGIDEYIKQVGEDKAHKLWNMSLETIDIIDERIEKYSIQCDWKKGYATLALNERRMDDLIEMEKESHKNFGYQNMQLWDKTKLKQHLGSDIYVGGLFDSNSGHLHPLNYCLGLAKACVDLGVQIFEQSPVVDMVEKNGCVEVKTAKSAVISQDVILATNAYIDVLPKSIHHGINRKILPVESFIIATEPLSQAVADSVINNGMSVCDNNLLLDYYRLSADNRLLFGSDSSSEKDMVAIMRKNMLCVFPQLENVKIDYGWAGPIDMTLNSTPHFGRISPHIYFAHGYSGHGVALTGLAGRIVAEAILGDDERLSIFEGLKVPSVYGGRIIKDLATKIGVQYYKFLDKYR.

This Haemophilus influenzae (strain ATCC 51907 / DSM 11121 / KW20 / Rd) protein is Probable oxidoreductase OrdL (ordL).